Consider the following 874-residue polypeptide: Leucine--tRNA ligase (874 aa).

The 'HIGH' region signature appears at 43 to 53 (PYPSGRIHIGH). The short motif at 630–634 (KMSKS) is the 'KMSKS' region element. K633 serves as a coordination point for ATP.

The protein belongs to the class-I aminoacyl-tRNA synthetase family.

Its subcellular location is the cytoplasm. The catalysed reaction is tRNA(Leu) + L-leucine + ATP = L-leucyl-tRNA(Leu) + AMP + diphosphate. The polypeptide is Leucine--tRNA ligase (Bradyrhizobium diazoefficiens (strain JCM 10833 / BCRC 13528 / IAM 13628 / NBRC 14792 / USDA 110)).